A 172-amino-acid chain; its full sequence is Translationally-controlled tumor protein homolog (172 aa).

The TCTP domain maps to 1–172; it reads MIIFKDLLTG…FKHGLDEEKV (172 aa).

This sequence belongs to the TCTP family. As to expression, expressed by the venom gland.

The protein localises to the secreted. Functionally, venom protein that causes edema, enhances vascular permeability and is likely related to the inflammatory activity of the venom. The polypeptide is Translationally-controlled tumor protein homolog (Loxosceles intermedia (Brown spider)).